Reading from the N-terminus, the 218-residue chain is Small ribosomal subunit protein mS34 (218 aa).

The interval 178–218 is disordered; that stretch reads RQKNGDPSTEEPMLSLERIRTDPWDYPENQEAKKKTKGTAV.

The protein belongs to the mitochondrion-specific ribosomal protein mS34 family. Component of the mitochondrial ribosome small subunit (28S) which comprises a 12S rRNA and about 30 distinct proteins.

Its subcellular location is the mitochondrion. In terms of biological role, required for mitochondrial translation, plays a role in maintaining the stability of the small ribosomal subunit and the 12S rRNA that are required for mitoribosome formation. In Bos taurus (Bovine), this protein is Small ribosomal subunit protein mS34.